The chain runs to 227 residues: ATP synthase F(0) complex subunit a (227 aa).

6 helical membrane passes run 12–32 (PYLM…LLFP), 69–89 (WALL…MGLL), 98–118 (QLSM…LIGL), 139–159 (IPIL…ALGV), 170–190 (LLIQ…PSIS), and 196–216 (ILLL…YVFV).

It belongs to the ATPase A chain family. As to quaternary structure, component of the ATP synthase complex composed at least of ATP5F1A/subunit alpha, ATP5F1B/subunit beta, ATP5MC1/subunit c (homooctomer), MT-ATP6/subunit a, MT-ATP8/subunit 8, ATP5ME/subunit e, ATP5MF/subunit f, ATP5MG/subunit g, ATP5MK/subunit k, ATP5MJ/subunit j, ATP5F1C/subunit gamma, ATP5F1D/subunit delta, ATP5F1E/subunit epsilon, ATP5PF/subunit F6, ATP5PB/subunit b, ATP5PD/subunit d, ATP5PO/subunit OSCP. ATP synthase complex consists of a soluble F(1) head domain (subunits alpha(3) and beta(3)) - the catalytic core - and a membrane F(0) domain - the membrane proton channel (subunits c, a, 8, e, f, g, k and j). These two domains are linked by a central stalk (subunits gamma, delta, and epsilon) rotating inside the F1 region and a stationary peripheral stalk (subunits F6, b, d, and OSCP). Interacts with DNAJC30; interaction is direct.

The protein localises to the mitochondrion inner membrane. It catalyses the reaction H(+)(in) = H(+)(out). Its function is as follows. Subunit a, of the mitochondrial membrane ATP synthase complex (F(1)F(0) ATP synthase or Complex V) that produces ATP from ADP in the presence of a proton gradient across the membrane which is generated by electron transport complexes of the respiratory chain. ATP synthase complex consist of a soluble F(1) head domain - the catalytic core - and a membrane F(1) domain - the membrane proton channel. These two domains are linked by a central stalk rotating inside the F(1) region and a stationary peripheral stalk. During catalysis, ATP synthesis in the catalytic domain of F(1) is coupled via a rotary mechanism of the central stalk subunits to proton translocation. With the subunit c (ATP5MC1), forms the proton-conducting channel in the F(0) domain, that contains two crucial half-channels (inlet and outlet) that facilitate proton movement from the mitochondrial intermembrane space (IMS) into the matrix. Protons are taken up via the inlet half-channel and released through the outlet half-channel, following a Grotthuss mechanism. This Coturnix japonica (Japanese quail) protein is ATP synthase F(0) complex subunit a.